We begin with the raw amino-acid sequence, 407 residues long: Aminomethyltransferase, mitochondrial (407 aa).

A mitochondrion-targeting transit peptide spans 1 to 29; the sequence is MRGGLWQVGQSITRRLGQSDKKTIVRRWY. The substrate site is built by Glu234, Arg265, and Tyr403.

Belongs to the GcvT family. As to quaternary structure, the glycine cleavage system is composed of four proteins: P, T, L and H.

Its subcellular location is the mitochondrion. It carries out the reaction N(6)-[(R)-S(8)-aminomethyldihydrolipoyl]-L-lysyl-[protein] + (6S)-5,6,7,8-tetrahydrofolate = N(6)-[(R)-dihydrolipoyl]-L-lysyl-[protein] + (6R)-5,10-methylene-5,6,7,8-tetrahydrofolate + NH4(+). Functionally, the glycine cleavage system catalyzes the degradation of glycine. The chain is Aminomethyltransferase, mitochondrial (GDCST) from Flaveria trinervia (Clustered yellowtops).